A 288-amino-acid chain; its full sequence is Beta-lactamase CARB-4 (288 aa).

Residues 1-17 (MKLLLVFSLLIPSMVFA) form the signal peptide. S65 functions as the Acyl-ester intermediate in the catalytic mechanism. An intrachain disulfide couples C72 to C118. Residue 229 to 231 (RSG) coordinates substrate.

It belongs to the class-A beta-lactamase family.

The catalysed reaction is a beta-lactam + H2O = a substituted beta-amino acid. Its activity is regulated as follows. Inhibited by clavulanic acid and sulbactam. In terms of biological role, hydrolyzes carbenicillin. Methicillin and oxacillin are weakly hydrolyzed. This is Beta-lactamase CARB-4 (carB4) from Pseudomonas aeruginosa.